Reading from the N-terminus, the 569-residue chain is Toxin YxiD (569 aa).

Residues 1–235 (MKTLDVHALH…NPQMKQADDS (235 aa)) enclose the LXG domain. Residues 8 to 91 (ALHEGIQHTI…QHAISSVESN (84 aa)) are a coiled coil. The tract at residues 548-569 (HQAGIHGTGSPANELFKGGKKK) is disordered.

The protein in the N-terminal section; belongs to the LXG family. As to quaternary structure, probably interacts with cognate immunity protein YxxD but not with non-cognate immunity proteins. The interaction inhibits the toxic activity of YxxD.

The protein resides in the secreted. Functionally, toxic component of one of 6 LXG toxin-immunity modules in this strain. They promote kin selection, mediate competition in biofilms, and drive spatial segregation of different strains, indicating that LXG toxins may help avoid warfare between strains in biofilms. Mediates intercellular competition during biofilm formation; disruption of the operon disadvantages the bacteria, but overexpression of the cognate immunity protein restores growth in competition with wild-type. Overexpression alone in situ causes growth arrest but not cell lysis, a large decrease in chromosomal DNA content and the production of anucleate cells. No effect is seen on rRNA. Co-overexpression with cognate immunity protein YxxD does not cause growth arrest. The toxic effect is not dependent on the epsA and tapA operons which are required for biofilm formation. The sequence is that of Toxin YxiD (yxiD) from Bacillus subtilis (strain 168).